We begin with the raw amino-acid sequence, 198 residues long: Cyclin-dependent kinase inhibitor 1B (198 aa).

The span at 1–11 (MSNVRVSNGSP) shows a compositional bias: polar residues. A disordered region spans residues 1–22 (MSNVRVSNGSPSLERMDARQAE). Ser10 carries the phosphoserine; by UHMK1 modification. The interaction with CDK2 stretch occupies residues 51 to 91 (DMEEASQRKWNFDFQNHKPLEGKYEWQEVEKGSLPEFYYRP). Phosphotyrosine; by SRC is present on Tyr74. A disordered region spans residues 87–198 (FYYRPPRPPK…KKPGLRRRQT (112 aa)). Residue Tyr88 is modified to Phosphotyrosine; by ABL, LYN and SRC. A Phosphotyrosine modification is found at Tyr89. The segment covering 104 to 113 (QESQDVSGNR) has biased composition (polar residues). A compositionally biased stretch (basic and acidic residues) spans 126–137 (EDTHLVDQKTDT). A Nuclear localization signal motif is present at residues 153–169 (KRPATDDSSPQNKRANR). Phosphothreonine; by CaMK1, PKB/AKT1 and PIM1 is present on Thr157. Thr170 carries the phosphothreonine modification. The span at 175–186 (SDGSPNAGSVEQ) shows a compositional bias: polar residues. Position 187 is a phosphothreonine; by PKB/AKT1, CDK1 and CDK2 (Thr187). Thr198 carries the phosphothreonine; by CaMK1, PKB/AKT1, RPS6KA1, RPS6KA3 and PIM1 modification.

Belongs to the CDI family. As to quaternary structure, forms a ternary complex composed of CCNE1, CDK2 and CDKN1B. Interacts directly with CCNE1; the interaction is inhibited by CDK2-dependent phosphorylation on Thr-187. Interacts with COPS5, subunit of the COP9 signalosome complex; the interaction leads to CDKN1B degradation. Interacts with NUP50; the interaction leads to nuclear import and degradation of phosphorylated CDKN1B. Interacts with CCND1 and SNX6. Interacts (Thr-198-phosphorylated form) with 14-3-3 proteins, binds strongly YWHAQ, weakly YWHAE and YWHAH, but not YWHAB nor YWHAZ; the interaction with YWHAQ results in translocation to the cytoplasm. Interacts with AKT1 and LYN; the interactions lead to cytoplasmic mislocation, phosphorylation of CDKN1B and inhibition of cell cycle arrest. Forms a ternary complex with CCNA2 and CDK2; CDKN1B inhibits the kinase activity of CDK2 through conformational rearrangements. Interacts (unphosphorylated form) with CDK2. Forms a complex with CDK2 and SPDYA, but does not directly interact with SPDYA. Forms a ternary complex composed of cyclin D, CDK4 and CDKN1B. Interacts (phosphorylated on Tyr-88 and Tyr-89) with CDK4; the interaction is required for cyclin D and CDK4 complex assembly, induces nuclear translocation and activates the CDK4 kinase activity. Interacts with GRB2. Interacts with PIM1. Identified in a complex with SKP1, SKP2 and CKS1B. Interacts with UHMK1; the interaction leads to cytoplasmic mislocation, phosphorylation of CDKN1B and inhibition of cell cycle arrest. Also interacts with CDK1. Dephosphorylated on Thr-187 by PPM1H, leading to CDKN1B stability. Post-translationally, phosphorylated; phosphorylation occurs on serine, threonine and tyrosine residues. Phosphorylation on Ser-10 is the major site of phosphorylation in resting cells, takes place at the G(0)-G(1) phase and leads to protein stability. Phosphorylation on other sites is greatly enhanced by mitogens, growth factors, cMYC and in certain cancer cell lines. The phosphorylated form found in the cytoplasm is inactivate. Phosphorylation on Thr-198 is required for interaction with 14-3-3 proteins. Phosphorylation on Thr-187, by CDK1 and CDK2 leads to protein ubiquitination and proteasomal degradation. Tyrosine phosphorylation promotes this process. Phosphorylation by PKB/AKT1 can be suppressed by LY294002, an inhibitor of the catalytic subunit of PI3K. Phosphorylation on Tyr-88 and Tyr-89 has no effect on binding CDK2, but is required for binding CDK4. Dephosphorylated on tyrosine residues by G-CSF. Dephosphorylated on Thr-187 by PPM1H, leading to CDKN1B stability. In terms of processing, ubiquitinated; in the cytoplasm by the KPC complex (composed of RNF123/KPC1 and UBAC1/KPC2) and, in the nucleus, by SCF(SKP2). The latter requires prior phosphorylation on Thr-187. Ubiquitinated; by a TRIM21-containing SCF(SKP2)-like complex; leads to its degradation. Subject to degradation in the lysosome. Interaction with SNX6 promotes lysosomal degradation.

The protein localises to the nucleus. It localises to the cytoplasm. It is found in the endosome. Functionally, important regulator of cell cycle progression. Inhibits the kinase activity of CDK2 bound to cyclin A, but has little inhibitory activity on CDK2 bound to SPDYA. Involved in G1 arrest. Potent inhibitor of cyclin E- and cyclin A-CDK2 complexes. Forms a complex with cyclin type D-CDK4 complexes and is involved in the assembly, stability, and modulation of CCND1-CDK4 complex activation. Acts either as an inhibitor or an activator of cyclin type D-CDK4 complexes depending on its phosphorylation state and/or stoichometry. This Felis catus (Cat) protein is Cyclin-dependent kinase inhibitor 1B (CDKN1B).